The following is a 376-amino-acid chain: ORC1-type DNA replication protein 2 (376 aa).

Residues 73–77, Y209, and R221 contribute to the ATP site; that span reads TGKTS.

It belongs to the CDC6/cdc18 family.

In terms of biological role, involved in regulation of DNA replication. This Archaeoglobus fulgidus (strain ATCC 49558 / DSM 4304 / JCM 9628 / NBRC 100126 / VC-16) protein is ORC1-type DNA replication protein 2 (cdc6-2).